The following is a 124-amino-acid chain: Small ribosomal subunit protein uS12 (124 aa).

A 3-methylthioaspartic acid modification is found at Asp-89.

The protein belongs to the universal ribosomal protein uS12 family. In terms of assembly, part of the 30S ribosomal subunit. Contacts proteins S8 and S17. May interact with IF1 in the 30S initiation complex.

With S4 and S5 plays an important role in translational accuracy. Functionally, interacts with and stabilizes bases of the 16S rRNA that are involved in tRNA selection in the A site and with the mRNA backbone. Located at the interface of the 30S and 50S subunits, it traverses the body of the 30S subunit contacting proteins on the other side and probably holding the rRNA structure together. The combined cluster of proteins S8, S12 and S17 appears to hold together the shoulder and platform of the 30S subunit. This Shewanella oneidensis (strain ATCC 700550 / JCM 31522 / CIP 106686 / LMG 19005 / NCIMB 14063 / MR-1) protein is Small ribosomal subunit protein uS12.